We begin with the raw amino-acid sequence, 72 residues long: Translation initiation factor IF-1 2 (72 aa).

Residues 1–72 (MAKEELIEFE…TKGRINYRHK (72 aa)) enclose the S1-like domain.

This sequence belongs to the IF-1 family. Component of the 30S ribosomal translation pre-initiation complex which assembles on the 30S ribosome in the order IF-2 and IF-3, IF-1 and N-formylmethionyl-tRNA(fMet); mRNA recruitment can occur at any time during PIC assembly.

The protein localises to the cytoplasm. One of the essential components for the initiation of protein synthesis. Stabilizes the binding of IF-2 and IF-3 on the 30S subunit to which N-formylmethionyl-tRNA(fMet) subsequently binds. Helps modulate mRNA selection, yielding the 30S pre-initiation complex (PIC). Upon addition of the 50S ribosomal subunit IF-1, IF-2 and IF-3 are released leaving the mature 70S translation initiation complex. The protein is Translation initiation factor IF-1 2 of Ralstonia nicotianae (strain ATCC BAA-1114 / GMI1000) (Ralstonia solanacearum).